Reading from the N-terminus, the 253-residue chain is MKVIITVNYEEMSKKAAEIVKKQIKEKPNTVLGLATGSTPLGMYKHLIEMYKRGEIDFSNVITFNLDEYIGLSPDHPQSYHYFMFHNFFNHINIKKENVHIPNGIAEDLEEECRKYEEEIEKAGGIDLQILGIGINGHIGFNEPDESIETKTHVVTLTEKTINANKRFFKSAEEVPRKAITMGLGSIMKAKKIVLLASGKNKAEAIKETIKGQLTTKVPATVLALHHDVTIIIDKEAASLIPDEDLKEIEVIV.

D67 serves as the catalytic Proton acceptor; for enolization step. Catalysis depends on N136, which acts as the For ring-opening step. The Proton acceptor; for ring-opening step role is filled by H138. Catalysis depends on E143, which acts as the For ring-opening step.

The protein belongs to the glucosamine/galactosamine-6-phosphate isomerase family. NagB subfamily.

It catalyses the reaction alpha-D-glucosamine 6-phosphate + H2O = beta-D-fructose 6-phosphate + NH4(+). It functions in the pathway amino-sugar metabolism; N-acetylneuraminate degradation; D-fructose 6-phosphate from N-acetylneuraminate: step 5/5. Functionally, catalyzes the reversible isomerization-deamination of glucosamine 6-phosphate (GlcN6P) to form fructose 6-phosphate (Fru6P) and ammonium ion. The protein is Glucosamine-6-phosphate deaminase of Thermoanaerobacter sp. (strain X514).